Reading from the N-terminus, the 733-residue chain is Sulfate transporter (733 aa).

The span at 1-18 shows a compositional bias: basic and acidic residues; the sequence is MSLKNEEQNDLSPKDSVK. A disordered region spans residues 1 to 37; it reads MSLKNEEQNDLSPKDSVKGNDQYRAPSGIHLEREEES. S12 and S16 each carry phosphoserine. 2 consecutive transmembrane segments (helical) span residues 113–133 and 138–158; these read VMSGLIVGILLVPQSIAYSLL and PIYGLYTSFFASLIYFILGTS. N-linked (GlcNAc...) asparagine glycosylation is present at N194. 6 helical membrane passes run 214–234, 237–257, 379–399, 415–435, 453–473, and 519–539; these read IIVGSTVTFVAGVYQVAMGFF, GFVSVYLSDALLGGFVTGASF, IDAIAIAIIGFAITVSLSEMF, AIGFCNIIPSFFHCFTTSAAL, VMTALVLLLVLLVIAPLFFSL, and LISTEIGLLTGVCFSMFCVIL. One can recognise an STAS domain in the interval 563–714; the sequence is AYKNLQAKSG…SVYEAMTFAE (152 aa).

This sequence belongs to the SLC26A/SulP transporter (TC 2.A.53) family. N-glycosylated.

It is found in the cell membrane. It localises to the apical cell membrane. It carries out the reaction oxalate(in) + sulfate(out) = oxalate(out) + sulfate(in). It catalyses the reaction sulfate(out) + 2 chloride(in) = sulfate(in) + 2 chloride(out). The enzyme catalyses oxalate(out) + 2 chloride(in) = oxalate(in) + 2 chloride(out). The catalysed reaction is bromide(in) + chloride(out) = bromide(out) + chloride(in). It carries out the reaction nitrate(in) + chloride(out) = nitrate(out) + chloride(in). It catalyses the reaction iodide(in) + chloride(out) = iodide(out) + chloride(in). Sulfate transporter which mediates sulfate uptake into chondrocytes in order to maintain adequate sulfation of proteoglycans which is needed for cartilage development. Mediates electroneutral anion exchange of sulfate ions for oxalate ions, sulfate and oxalate ions for chloride and/or hydroxyl ions and chloride ions for bromide, iodide and nitrate ions. The coupling of sulfate transport to both hydroxyl and chloride ions likely serves to ensure transport at both acidic pH when most sulfate uptake is mediated by sulfate-hydroxide exchange and alkaline pH when most sulfate uptake is mediated by sulfate-chloride exchange. Essential for chondrocyte proliferation, differentiation and cell size expansion. The chain is Sulfate transporter (SLC26A2) from Bubalus bubalis (Domestic water buffalo).